Consider the following 130-residue polypeptide: Small ribosomal subunit protein uS8 (130 aa).

It belongs to the universal ribosomal protein uS8 family. As to quaternary structure, part of the 30S ribosomal subunit. Contacts proteins S5 and S12.

Functionally, one of the primary rRNA binding proteins, it binds directly to 16S rRNA central domain where it helps coordinate assembly of the platform of the 30S subunit. The protein is Small ribosomal subunit protein uS8 of Aster yellows witches'-broom phytoplasma (strain AYWB).